Here is a 116-residue protein sequence, read N- to C-terminus: NADH-ubiquinone oxidoreductase chain 3 (116 aa).

Transmembrane regions (helical) follow at residues 3 to 23 (LITT…TISF), 56 to 76 (FFLI…LLPL), and 87 to 107 (LTLI…IYEW).

This sequence belongs to the complex I subunit 3 family.

It localises to the mitochondrion membrane. The catalysed reaction is a ubiquinone + NADH + 5 H(+)(in) = a ubiquinol + NAD(+) + 4 H(+)(out). Core subunit of the mitochondrial membrane respiratory chain NADH dehydrogenase (Complex I) that is believed to belong to the minimal assembly required for catalysis. Complex I functions in the transfer of electrons from NADH to the respiratory chain. The immediate electron acceptor for the enzyme is believed to be ubiquinone. The polypeptide is NADH-ubiquinone oxidoreductase chain 3 (MT-ND3) (Oncorhynchus gorbuscha (Pink salmon)).